The following is a 532-amino-acid chain: Protein PTST homolog 2, chloroplastic (532 aa).

The N-terminal 71 residues, 1–71 (MVSINSGPIS…KPRKKSCCSR (71 aa)), are a transit peptide targeting the chloroplast. 4 disordered regions span residues 165–201 (QLPN…SRND), 256–292 (EVDG…SETW), 314–347 (SSGL…EDVN), and 367–388 (HSLR…TAGN). Basic and acidic residues predominate over residues 173 to 183 (EMDKTLNHGDL). Residues 320 to 339 (VKKDDTKKDSGDSMNGKDRI) are compositionally biased toward basic and acidic residues. Positions 389 to 454 (LENLSDDWEY…ASRALRLLRT (66 aa)) form a coiled coil.

Interacts with PTST3 and SS4. Interacts with MFP1; the interaction is essential for the initiation of starch granules biosynthesis in leaf chloroplasts, for the correct location of the process in the stromal spaces between the thylakoid membranes, and for the association of this protein with the thylakoid membranes. Interacts with PII1/MRC; the interaction is essential for the initiation of starch granules biosynthesis in leaf chloroplasts.

The protein resides in the plastid. It is found in the chloroplast. It localises to the chloroplast thylakoid membrane. In terms of biological role, involved in starch granule initiation in leaf chloroplasts. Binds and delivers suitable maltooligosaccharide substrates to starch synthase 4 (SS4). The chain is Protein PTST homolog 2, chloroplastic from Arabidopsis thaliana (Mouse-ear cress).